The chain runs to 311 residues: Aspartate carbamoyltransferase catalytic subunit (311 aa).

Arginine 57 and threonine 58 together coordinate carbamoyl phosphate. L-aspartate is bound at residue lysine 86. Residues arginine 107, histidine 135, and glutamine 138 each coordinate carbamoyl phosphate. Residues arginine 168 and arginine 230 each contribute to the L-aspartate site. Carbamoyl phosphate is bound by residues leucine 269 and proline 270.

It belongs to the aspartate/ornithine carbamoyltransferase superfamily. ATCase family. Heterooligomer of catalytic and regulatory chains.

The catalysed reaction is carbamoyl phosphate + L-aspartate = N-carbamoyl-L-aspartate + phosphate + H(+). It participates in pyrimidine metabolism; UMP biosynthesis via de novo pathway; (S)-dihydroorotate from bicarbonate: step 2/3. Functionally, catalyzes the condensation of carbamoyl phosphate and aspartate to form carbamoyl aspartate and inorganic phosphate, the committed step in the de novo pyrimidine nucleotide biosynthesis pathway. This chain is Aspartate carbamoyltransferase catalytic subunit, found in Staphylothermus marinus (strain ATCC 43588 / DSM 3639 / JCM 9404 / F1).